Here is a 443-residue protein sequence, read N- to C-terminus: D(2) dopamine receptor (443 aa).

Over 1-37 (MDPLNLSWYDDDLESQNWSRPFNGSEGKPGKPHYNYY) the chain is Extracellular. N5, N17, and N23 each carry an N-linked (GlcNAc...) asparagine glycan. A helical membrane pass occupies residues 38–60 (AMLLTLLIFIIVFGNVLVCMAVS). The Cytoplasmic segment spans residues 61 to 70 (REKALQTTTN). The chain crosses the membrane as a helical span at residues 71 to 93 (YLIVSLAVADLLVATLVMPWVVY). At 94-108 (LEVVGEWKFSRIHCD) the chain is on the extracellular side. Cysteines 107 and 182 form a disulfide. Residues 109–130 (IFVTLDVMMCTASILNLCAISI) form a helical membrane-spanning segment. Residues 131–151 (DRYTAVAMPMLYNTRYSSKRR) lie on the Cytoplasmic side of the membrane. The helical transmembrane segment at 152 to 172 (VTVMIAIVWVLSFTISCPLLF) threads the bilayer. Over 173-188 (GLNNTDQNECIIANPA) the chain is Extracellular. A helical membrane pass occupies residues 189 to 213 (FVVYSSIVSFYVPFIVTLLVYIKIY). The interval 211-373 (KIYIVLRRRR…SQQKEKKATQ (163 aa)) is interaction with PPP1R9B. The Cytoplasmic segment spans residues 214-373 (IVLRRRRKRV…SQQKEKKATQ (160 aa)). Residues 282-332 (EMLSSTSPPERTRYSPIPPSHHQLTLPDPSHHGLHSTADSPAKPEKNGHAK) are disordered. Basic and acidic residues predominate over residues 323–332 (AKPEKNGHAK). Residues 374–395 (MLAIVLGVFIICWLPFFITHIL) form a helical membrane-spanning segment. At 396-409 (NIHCECNIPPVLYS) the chain is on the extracellular side. C399 and C401 are disulfide-bonded. Residues 410–431 (AFTWLGYVNSAVNPIIYTTFNI) traverse the membrane as a helical segment. Residues 432-443 (EFRKAFLKILHC) are Cytoplasmic-facing. C443 carries S-palmitoyl cysteine lipidation.

It belongs to the G-protein coupled receptor 1 family. Forms homo- and heterooligomers with DRD4. The interaction with DRD4 may modulate agonist-induced downstream signaling. Interacts with CADPS and CADPS2. Interacts with GPRASP1, PPP1R9B and CLIC6. Interacts with ARRB2. Interacts with HTR2A. Interacts with DRD1. Interacts with KCNA2. In terms of processing, palmitoylated. Palmitoylation which is required for proper localization to the plasma membrane and stability of the receptor could be carried on by ZDHHC4, ZDHHC3 and ZDHHC8.

The protein resides in the cell membrane. The protein localises to the golgi apparatus membrane. Its function is as follows. Dopamine receptor whose activity is mediated by G proteins which inhibit adenylyl cyclase. Positively regulates postnatal regression of retinal hyaloid vessels via suppression of VEGFR2/KDR activity, downstream of OPN5. This chain is D(2) dopamine receptor (DRD2), found in Canis lupus familiaris (Dog).